The following is an 88-amino-acid chain: Small ribosomal subunit protein uS17 (88 aa).

The protein belongs to the universal ribosomal protein uS17 family. In terms of assembly, part of the 30S ribosomal subunit.

Functionally, one of the primary rRNA binding proteins, it binds specifically to the 5'-end of 16S ribosomal RNA. In Dechloromonas aromatica (strain RCB), this protein is Small ribosomal subunit protein uS17.